The chain runs to 546 residues: Choline/ethanolamine transporter FLVCR2 (546 aa).

A disordered region spans residues 1-84; sequence MVNESLNQEE…TLAQPSGLTH (84 aa). The Cytoplasmic segment spans residues 1–93; the sequence is MVNESLNQEE…HPNELVKEDS (93 aa). Over residues 22–49 the composition is skewed to polar residues; the sequence is QADTSYSTQPSVSIHPSVSGHPSVSIHP. 7 consecutive repeat copies span residues 31–36, 37–42, 43–48, 49–54, 55–60, 61–66, and 67–72. Residues 31–84 are 9 X 6 AA tandem repeats of P-S-[VS]-S-[VIAG]-[HD]; the sequence is PSVSIHPSVSGHPSVSIHPSVSGHPSVSIDPSVSVHPSSSAHPSTLAQPSGLTH. Residues 54-74 are compositionally biased toward low complexity; it reads HPSVSIDPSVSVHPSSSAHPS. An 8; approximate repeat occupies 73-78; that stretch reads PSTLAQ. Residues 79 to 84 form a 9; approximate repeat; sequence PSGLTH. A helical membrane pass occupies residues 94 to 118; the sequence is VIKVSKRRWAVVLVFSCYSLCNAFQ. Choline is bound by residues asparagine 115, alanine 116, and tryptophan 119. Topologically, residues 119 to 136 are extracellular; sequence WIQYGSINNIFMNFYGVS. Residues 137–164 traverse the membrane as a helical segment; sequence AFAIDWLSMCYMLTYIPLLLPVAWMLEK. The Cytoplasmic segment spans residues 165–166; it reads FG. The chain crosses the membrane as a helical span at residues 167-186; it reads LRTIAITGSALNCLGAWVKL. Over 187–193 the chain is Extracellular; sequence GSLEPHL. Residues 194-222 form a helical membrane-spanning segment; sequence FPVTMVGQVICSVAQVFILGMPSRIASVW. Residue leucine 212 coordinates choline. At 223–227 the chain is on the cytoplasmic side; the sequence is FGANE. A helical membrane pass occupies residues 228–253; it reads VSTACSMAVFGNQLGIAIGFLVPPVL. Over 254–258 the chain is Extracellular; that stretch reads VPNIK. The helical transmembrane segment at 259–288 threads the bilayer; it reads DQEKLAYHISIMFYIIGGVATLLFILVIIV. Residues 289 to 324 lie on the Cytoplasmic side of the membrane; that stretch reads FKEKPKYPPSRAQSLSYALATTDASYLSSIVRLFKN. Residues 325–355 form a helical membrane-spanning segment; it reads LNFVLLVITYGLNAGAFYALSTLLNRMVIMH. Tyrosine 342 serves as a coordination point for choline. Topologically, residues 356-359 are extracellular; it reads FPGQ. The helical transmembrane segment at 360 to 388 threads the bilayer; that stretch reads EVNAGRIGLTIVIAGMFGAMISGIWLDKS. Residues 389–390 are Cytoplasmic-facing; sequence KT. A helical membrane pass occupies residues 391–413; the sequence is YKETTLVVYIMTLVGMVVYTFTL. The Extracellular segment spans residues 414 to 416; sequence NLN. The helical transmembrane segment at 417–446 threads the bilayer; sequence HLWIVFITADSLGFFMTGYLPLGFEFAVEL. Topologically, residues 447–454 are cytoplasmic; that stretch reads TYPESEGV. A helical transmembrane segment spans residues 455–480; that stretch reads SSGLLNVSAQVFGIIFTISQGQIIDN. Glutamine 464 provides a ligand contact to choline. Residues 481 to 482 are Extracellular-facing; it reads YG. The helical transmembrane segment at 483–505 threads the bilayer; sequence SVPGNIFLCVFLALGSALTAFIK. Residues 506 to 546 are Cytoplasmic-facing; it reads SDLRRQRANKDAPETKVQEEEEEEEESNTSKVPTVLSEAHL. The segment covering 511–523 has biased composition (basic and acidic residues); that stretch reads QRANKDAPETKVQ. Residues 511–546 form a disordered region; that stretch reads QRANKDAPETKVQEEEEEEEESNTSKVPTVLSEAHL. Serine 535 is modified (phosphoserine).

Belongs to the major facilitator superfamily. Feline leukemia virus subgroup C receptor (TC 2.A.1.28.1) family. In terms of assembly, interacts with components of electron transfer chain complexes III, IV and V including CYC1, NDUFA4, COX4I1, ATP5PD and ATP5F1C; these interactions occur in the absence of heme and are disrupted upon heme binding. Interacts with ATP2A2; this interaction occurs in the absence of heme and promotes ATP2A2 proteasomal degradation; the complex is dissociated upon heme binding. Interacts with HMOX1; this interaction is potentiated in the presence of heme.

It is found in the cell membrane. It localises to the mitochondrion membrane. The protein resides in the endoplasmic reticulum membrane. It carries out the reaction choline(out) = choline(in). The catalysed reaction is ethanolamine(in) = ethanolamine(out). It catalyses the reaction heme b(in) = heme b(out). Its function is as follows. Choline uniporter that specifically mediates choline uptake at the blood-brain-barrier. Responsible for the majority of choline uptake across the blood-brain-barrier from the circulation into the brain. Choline, a nutrient critical for brain development, is a precursor of phosphatidylcholine, as well as betaine. Also mediates transport of ethanolamine. Choline and ethanolamine transport is not coupled with proton transport and is exclusively driven by the choline gradient across the plasma membrane. However, the presence of an inwardly directed proton gradient enhances choline uptake. Also acts as a heme b transporter. Required to regulate mitochondrial respiration processes, ATP synthesis and thermogenesis. At low heme levels, interacts with components of electron transfer chain (ETC) complexes and ATP2A2, leading to ubiquitin-mediated degradation of ATP2A2 and inhibition of thermogenesis. Upon heme binding, dissociates from ETC complexes to allow switching from mitochondrial ATP synthesis to thermogenesis. In Rattus norvegicus (Rat), this protein is Choline/ethanolamine transporter FLVCR2 (Flvcr2).